The chain runs to 92 residues: Small ribosomal subunit protein uS19 (92 aa).

The protein belongs to the universal ribosomal protein uS19 family.

In terms of biological role, protein S19 forms a complex with S13 that binds strongly to the 16S ribosomal RNA. In Acaryochloris marina (strain MBIC 11017), this protein is Small ribosomal subunit protein uS19.